The sequence spans 322 residues: Homoserine kinase (322 aa).

This sequence belongs to the pseudomonas-type ThrB family.

The catalysed reaction is L-homoserine + ATP = O-phospho-L-homoserine + ADP + H(+). It participates in amino-acid biosynthesis; L-threonine biosynthesis; L-threonine from L-aspartate: step 4/5. The polypeptide is Homoserine kinase (Agrobacterium fabrum (strain C58 / ATCC 33970) (Agrobacterium tumefaciens (strain C58))).